Here is a 57-residue protein sequence, read N- to C-terminus: UPF0391 membrane protein Nham_2738 (57 aa).

2 helical membrane passes run 4–24 (WVVTFLIIALIAGILGFGGLA) and 30–50 (IAKIIFFIAVILFVVSAVVGL).

The protein belongs to the UPF0391 family.

The protein resides in the cell membrane. This Nitrobacter hamburgensis (strain DSM 10229 / NCIMB 13809 / X14) protein is UPF0391 membrane protein Nham_2738.